Here is a 471-residue protein sequence, read N- to C-terminus: MFAFYFLTACISLKGVFGVSPSYNGLGLTPQMGWDNWNTFACDVSEQLLLDTADRISDLGLKDMGYKYVILDDCWSSGRDSDGFLVADKHKFPNGMGHVADHLHNNSFLFGMYSSAGEYTCAGYPGSLGREEEDAQFFANNRVDYLKYDNCYNKGQFGTPDVSYHRYKAMSDALNKTGRPIFYSLCNWGQDLTFYWGSGIANSWRMSGDITAEFTRPDSRCPCDGDEYDCKYAGFHCSIMNILNKAAPMGQNAGVGGWNDLDNLEVGVGNLTDDEEKAHFSMWAMVKSPLIIGADVNHLKASSYSIYSQASVIAINQDPKGIPATRVWRYYVSDTDEYGQGEIQMWSGPLDNGDQVVALLNGGSVARPMNTTLEEIFFDSNLGSKELTSTWDIYDLWANRVDNSTASAILEQNKAATGILYNATEQSYKDGLSKNDTRLFGQKIGSLSPNAILNTTVPAHGIAFYRLRPSA.

An N-terminal signal peptide occupies residues 1–18; it reads MFAFYFLTACISLKGVFG. A disulfide bridge connects residues cysteine 42 and cysteine 74. Positions 72 and 73 each coordinate substrate. Asparagine 105 is a glycosylation site (N-linked (GlcNAc...) asparagine). Residues cysteine 121 and cysteine 151 are joined by a disulfide bond. Lysine 147 serves as a coordination point for substrate. Aspartate 149 serves as the catalytic Nucleophile. Asparagine 175 is a glycosylation site (N-linked (GlcNAc...) asparagine). Arginine 205 lines the substrate pocket. The active-site Proton donor is aspartate 209. 2 disulfides stabilise this stretch: cysteine 221-cysteine 237 and cysteine 223-cysteine 230. Position 251 (glutamine 251) interacts with substrate. N-linked (GlcNAc...) asparagine glycans are attached at residues asparagine 270, asparagine 370, asparagine 403, asparagine 422, asparagine 435, and asparagine 454.

Belongs to the glycosyl hydrolase 27 family. In terms of assembly, homotetramer.

The protein localises to the secreted. The catalysed reaction is Hydrolysis of terminal, non-reducing alpha-D-galactose residues in alpha-D-galactosides, including galactose oligosaccharides, galactomannans and galactolipids.. The protein is Alpha-galactosidase 6 (MEL6) of Saccharomyces cerevisiae (Baker's yeast).